We begin with the raw amino-acid sequence, 336 residues long: Phenylalanine--tRNA ligase alpha subunit (336 aa).

Glutamate 259 contributes to the Mg(2+) binding site.

This sequence belongs to the class-II aminoacyl-tRNA synthetase family. Phe-tRNA synthetase alpha subunit type 1 subfamily. Tetramer of two alpha and two beta subunits. Requires Mg(2+) as cofactor.

The protein localises to the cytoplasm. The enzyme catalyses tRNA(Phe) + L-phenylalanine + ATP = L-phenylalanyl-tRNA(Phe) + AMP + diphosphate + H(+). The polypeptide is Phenylalanine--tRNA ligase alpha subunit (Tropheryma whipplei (strain Twist) (Whipple's bacillus)).